The following is a 104-amino-acid chain: Large ribosomal subunit protein bL21 (104 aa).

This sequence belongs to the bacterial ribosomal protein bL21 family. Part of the 50S ribosomal subunit. Contacts protein L20.

In terms of biological role, this protein binds to 23S rRNA in the presence of protein L20. This Pseudomonas putida (strain GB-1) protein is Large ribosomal subunit protein bL21.